The primary structure comprises 555 residues: AP2-like ethylene-responsive transcription factor ANT (555 aa).

2 disordered regions span residues 34–56 and 199–231; these read GGREAIYSSSTSSAATSSSSVPP and LSMSPGSQSSCITGSHHHQQNQNQNHQSQNHQQ. Low complexity-rich tracts occupy residues 41–53, 199–208, and 218–231; these read SSSTSSAATSSSS, LSMSPGSQSS, and QNQNQNHQSQNHQQ. 2 DNA-binding regions (AP2/ERF) span residues 283-349 and 385-443; these read QYRG…TNFS and IYRG…TNFD.

The protein belongs to the AP2/ERF transcription factor family. AP2 subfamily. Interacts with ANL2, HDG2 and HDG10, and possibly with GL2, HDG3, HDG8, ATML1 and PDF2. As to expression, mostly expressed in developing flowers. Also present in mature flowers, siliques and seedlings, but not in mature roots, leaves and stems. Expressed in ovules and in vegetative and floral primordia.

It is found in the nucleus. Its function is as follows. Transcription activator that recognizes and binds to the DNA consensus sequence 5'-CAC[AG]N[AT]TNCCNANG-3'. Required for the initiation and growth of ovules integumenta, and for the development of female gametophyte. Plays a critical role in the development of gynoecium marginal tissues (e.g. stigma, style and septa), and in the fusion of carpels and of medial ridges leading to ovule primordia. Also involved in organs initiation and development, including floral organs. Maintains the meristematic competence of cells and consequently sustains expression of cell cycle regulators during organogenesis, thus controlling the final size of each organ by controlling their cell number. Regulates INO autoinduction and expression pattern. As ANT promotes petal cell identity and mediates down-regulation of AG in flower whorl 2, it functions as a class A homeotic gene. The polypeptide is AP2-like ethylene-responsive transcription factor ANT (Arabidopsis thaliana (Mouse-ear cress)).